Consider the following 739-residue polypeptide: ABC transporter G family member 20 (739 aa).

One can recognise an ABC transporter domain in the interval 88–351 (LSFKDLTYSV…FSEFGHPIPE (264 aa)). 144–151 (GASGSGKS) provides a ligand contact to ATP. The 211-residue stretch at 433-643 (TEMLVIGKRS…PYEGVLQNEF (211 aa)) folds into the ABC transmembrane type-2 domain. The next 6 helical transmembrane spans lie at 452–472 (LFGI…TIFW), 487–507 (FFAF…PVFL), 528–548 (VLAH…AFAA), 563–583 (FLFF…FVTF), 593–613 (IGFT…GFFI), and 712–732 (LWIT…TLLI).

This sequence belongs to the ABC transporter superfamily. ABCG family. Eye pigment precursor importer (TC 3.A.1.204) subfamily.

It localises to the membrane. The chain is ABC transporter G family member 20 (ABCG20) from Arabidopsis thaliana (Mouse-ear cress).